The chain runs to 375 residues: Actin, cytoplasmic (375 aa).

This sequence belongs to the actin family.

It is found in the cytoplasm. It localises to the cytoskeleton. The catalysed reaction is ATP + H2O = ADP + phosphate + H(+). In terms of biological role, actins are highly conserved proteins that are involved in various types of cell motility and are ubiquitously expressed in all eukaryotic cells. This is Actin, cytoplasmic from Oxytricha trifallax (Sterkiella histriomuscorum).